A 124-amino-acid chain; its full sequence is Small ribosomal subunit protein uS13 (124 aa).

Residues 99–124 (RGQRTRTNARTRKGPRKTVGVMRKKS) form a disordered region. Positions 101-124 (QRTRTNARTRKGPRKTVGVMRKKS) are enriched in basic residues.

Belongs to the universal ribosomal protein uS13 family. As to quaternary structure, part of the 30S ribosomal subunit. Forms a loose heterodimer with protein S19. Forms two bridges to the 50S subunit in the 70S ribosome.

Located at the top of the head of the 30S subunit, it contacts several helices of the 16S rRNA. In the 70S ribosome it contacts the 23S rRNA (bridge B1a) and protein L5 of the 50S subunit (bridge B1b), connecting the 2 subunits; these bridges are implicated in subunit movement. Contacts the tRNAs in the A and P-sites. This is Small ribosomal subunit protein uS13 from Caldicellulosiruptor bescii (strain ATCC BAA-1888 / DSM 6725 / KCTC 15123 / Z-1320) (Anaerocellum thermophilum).